Consider the following 608-residue polypeptide: ABC transporter ATP-binding protein RamB (608 aa).

5 helical membrane passes run 25 to 45, 66 to 86, 141 to 161, 166 to 186, and 253 to 273; these read GVLV…FLVG, LWLG…RGVF, GLVL…LGLL, ALLV…LVTL, and AALG…VEWL. Positions 30–296 constitute an ABC transmembrane type-1 domain; sequence LALWSLAESG…FTYLVQSLLP (267 aa). A disordered region spans residues 321–362; the sequence is GPEPEPEPEPEPEPEPELGSGLEPEPEPASEPESGPSTASAS. The span at 324 to 336 shows a compositional bias: acidic residues; that stretch reads PEPEPEPEPEPEP. The segment covering 351 to 362 has biased composition (low complexity); that stretch reads EPESGPSTASAS. The ABC transporter domain maps to 376 to 605; the sequence is VELRSVTLSY…SPLYRDLTGH (230 aa). Residue 410-417 coordinates ATP; that stretch reads GPSGIGKS.

It belongs to the ABC transporter superfamily.

Its subcellular location is the cell membrane. Its function is as follows. Probably involved in exporting SapB from the cell. Expression of the ram locus (ramA, ramB and ramR) induces rapid aerial mycelium formation in S.lividans. The polypeptide is ABC transporter ATP-binding protein RamB (Streptomyces coelicolor (strain ATCC BAA-471 / A3(2) / M145)).